A 459-amino-acid polypeptide reads, in one-letter code: UDP-N-acetylmuramoylalanine--D-glutamate ligase (459 aa).

G120–T126 is a binding site for ATP.

It belongs to the MurCDEF family.

It localises to the cytoplasm. The enzyme catalyses UDP-N-acetyl-alpha-D-muramoyl-L-alanine + D-glutamate + ATP = UDP-N-acetyl-alpha-D-muramoyl-L-alanyl-D-glutamate + ADP + phosphate + H(+). The protein operates within cell wall biogenesis; peptidoglycan biosynthesis. In terms of biological role, cell wall formation. Catalyzes the addition of glutamate to the nucleotide precursor UDP-N-acetylmuramoyl-L-alanine (UMA). This chain is UDP-N-acetylmuramoylalanine--D-glutamate ligase, found in Lactobacillus acidophilus (strain ATCC 700396 / NCK56 / N2 / NCFM).